The primary structure comprises 248 residues: Ribosomal RNA small subunit methyltransferase J (248 aa).

S-adenosyl-L-methionine-binding positions include 101–102 (RD), 117–118 (ER), 153–154 (SS), and Asp171.

The protein belongs to the methyltransferase superfamily. RsmJ family.

It is found in the cytoplasm. It catalyses the reaction guanosine(1516) in 16S rRNA + S-adenosyl-L-methionine = N(2)-methylguanosine(1516) in 16S rRNA + S-adenosyl-L-homocysteine + H(+). Functionally, specifically methylates the guanosine in position 1516 of 16S rRNA. The sequence is that of Ribosomal RNA small subunit methyltransferase J from Serratia proteamaculans (strain 568).